A 187-amino-acid chain; its full sequence is HTH-type transcriptional regulator NfxB (187 aa).

Positions 26–45 (LKELAEAAGVSKATLHRFCG) form a DNA-binding region, H-T-H motif.

Its function is as follows. Confers resistance to guinolones. May negatively regulate the expression of genes that are associated with cell permeability to drugs. The protein is HTH-type transcriptional regulator NfxB (nfxB) of Pseudomonas aeruginosa (strain ATCC 15692 / DSM 22644 / CIP 104116 / JCM 14847 / LMG 12228 / 1C / PRS 101 / PAO1).